Here is a 139-residue protein sequence, read N- to C-terminus: Spermatogenesis-associated protein 33 (139 aa).

The interaction with ATG16L1 stretch occupies residues 1–67 (MVTHAAGART…TAKHPPPAAS (67 aa)). The disordered stretch occupies residues 1–83 (MVTHAAGART…VKQKSSRKKV (83 aa)). The segment covering 25-50 (KSKEKLMEKHSQEARQADRESEKPVD) has biased composition (basic and acidic residues). Residues 68-139 (LEEKPDVKQK…ADAYNSHLKE (72 aa)) form an interaction with VDAC2 region. Positions 86–91 (PQIIIT) match the PQIIIT motif. Phosphoserine is present on Ser-94. Residues 97-109 (TLVSCSSSGSDQQ) show a composition bias toward polar residues. Residues 97-139 (TLVSCSSSGSDQQRTIREPEDWGPYRRHRNPSTADAYNSHLKE) form a disordered region. A compositionally biased stretch (basic and acidic residues) spans 110–120 (RTIREPEDWGP).

Interacts (via PQIIIT motif) with PPP3R1, PPP3R2, PPP3CA, PPP3CB and PPP3CC. Interacts with VDAC2. Interacts with ATG16L1 (via WD repeats).

The protein resides in the cytoplasm. It is found in the cytosol. It localises to the nucleus. The protein localises to the mitochondrion. In terms of biological role, plays an important role in sperm motility and male fertility. Required for sperm midpiece flexibility and for the localization of sperm calcineurin to the mitochondria. Promotes mitophagy as well as acts as an autophagy mediator in male germline cells. Links damaged mitochondria to autophagosomes via its binding to the outer mitochondrial membrane protein VDAC2, as well as to key autophagy machinery component ATG16L1. The sequence is that of Spermatogenesis-associated protein 33 (SPATA33) from Homo sapiens (Human).